The sequence spans 93 residues: Large ribosomal subunit protein bL36m (93 aa).

A mitochondrion-targeting transit peptide spans 1–35 (MFLQTLRLTMPRMFLHMKPSPITITRACTVPSLLS).

It belongs to the bacterial ribosomal protein bL36 family. Component of the mitochondrial large ribosomal subunit (mt-LSU). Mature yeast 74S mitochondrial ribosomes consist of a small (37S) and a large (54S) subunit. The 37S small subunit contains a 15S ribosomal RNA (15S mt-rRNA) and 34 different proteins. The 54S large subunit contains a 21S rRNA (21S mt-rRNA) and 46 different proteins. bL36m has a zinc binding site.

It is found in the mitochondrion. In terms of biological role, component of the mitochondrial ribosome (mitoribosome), a dedicated translation machinery responsible for the synthesis of mitochondrial genome-encoded proteins, including at least some of the essential transmembrane subunits of the mitochondrial respiratory chain. The mitoribosomes are attached to the mitochondrial inner membrane and translation products are cotranslationally integrated into the membrane. bL36m may be involved in a process influencing telomere capping. The polypeptide is Large ribosomal subunit protein bL36m (RTC6) (Saccharomyces cerevisiae (strain ATCC 204508 / S288c) (Baker's yeast)).